The primary structure comprises 172 residues: MVDKRESYTKEDLLASGRGELFGANGPQLPAPNMLMMDRVVKMTETGGNFDKGYVEAELDINPDMWFFGCHFIGDPVMPGCLGLDAMWQLVGFYLGWLGGEGKGRALGVGEVKFTGQVLPSAKKVTYRIHFKRVVNRRLVMGIADGEVLVDGKQIYTATDLKVGLFQDTSAF.

The active site involves H71.

Belongs to the thioester dehydratase family. FabA subfamily. In terms of assembly, homodimer.

It is found in the cytoplasm. The catalysed reaction is a (3R)-hydroxyacyl-[ACP] = a (2E)-enoyl-[ACP] + H2O. It catalyses the reaction (3R)-hydroxydecanoyl-[ACP] = (2E)-decenoyl-[ACP] + H2O. The enzyme catalyses (2E)-decenoyl-[ACP] = (3Z)-decenoyl-[ACP]. The protein operates within lipid metabolism; fatty acid biosynthesis. Necessary for the introduction of cis unsaturation into fatty acids. Catalyzes the dehydration of (3R)-3-hydroxydecanoyl-ACP to E-(2)-decenoyl-ACP and then its isomerization to Z-(3)-decenoyl-ACP. Can catalyze the dehydratase reaction for beta-hydroxyacyl-ACPs with saturated chain lengths up to 16:0, being most active on intermediate chain length. The sequence is that of 3-hydroxydecanoyl-[acyl-carrier-protein] dehydratase from Cronobacter sakazakii (strain ATCC BAA-894) (Enterobacter sakazakii).